Here is a 154-residue protein sequence, read N- to C-terminus: Peptide methionine sulfoxide reductase MsrB (154 aa).

A MsrB domain is found at 28–150; it reads DQQWREQLSE…NSVSLIFNKI (123 aa). Residues cysteine 67, cysteine 70, cysteine 116, and cysteine 119 each contribute to the Zn(2+) site. The active-site Nucleophile is the cysteine 139.

Belongs to the MsrB Met sulfoxide reductase family. Requires Zn(2+) as cofactor.

The catalysed reaction is L-methionyl-[protein] + [thioredoxin]-disulfide + H2O = L-methionyl-(R)-S-oxide-[protein] + [thioredoxin]-dithiol. The sequence is that of Peptide methionine sulfoxide reductase MsrB from Vibrio vulnificus (strain CMCP6).